The following is a 310-amino-acid chain: Porphobilinogen deaminase (310 aa).

An S-(dipyrrolylmethanemethyl)cysteine modification is found at Cys242.

It belongs to the HMBS family. As to quaternary structure, monomer. Requires dipyrromethane as cofactor.

It carries out the reaction 4 porphobilinogen + H2O = hydroxymethylbilane + 4 NH4(+). It functions in the pathway porphyrin-containing compound metabolism; protoporphyrin-IX biosynthesis; coproporphyrinogen-III from 5-aminolevulinate: step 2/4. Its function is as follows. Tetrapolymerization of the monopyrrole PBG into the hydroxymethylbilane pre-uroporphyrinogen in several discrete steps. The chain is Porphobilinogen deaminase from Shewanella baltica (strain OS155 / ATCC BAA-1091).